A 397-amino-acid chain; its full sequence is Methyltransferase/ribosomally synthesized type I borosin cyclic peptide precursor mroMa1 (397 aa).

The interval 1–246 is methyltransferase domain; the sequence is MALKKPGSLT…TTSTFYVPPR (246 aa). Active-site residues include Arg70, Tyr74, and Tyr96. Residues Tyr96, His98, Val101, Ala128, Gln170, Gly208, Ser239, and Thr240 each contribute to the S-adenosyl-L-methionine site. The segment at 247 to 365 is clasp domain; the sequence is TPAPIDPKAV…GPIFVVMRQL (119 aa). The segment at 366–388 is precursor leader; sequence PSAIASGQEPSQEEIARADDATA. N-methylisoleucine is present on residues Ile391 and Ile392. Residue Tyr393 is modified to N-methyltyrosine. N-methylisoleucine is present on Ile394. Position 395 is an N-methylvaline (Val395).

This sequence in the N-terminal section; belongs to the precorrin methyltransferase family. As to quaternary structure, homodimer. In terms of processing, mroMA automethylates at Ile-391, Ile-392, Tyr-393, Ile-394 and Val-395 before being processed by the a prolyloligopeptidase which likely forms a peptidyl ester upon removal of the follower propeptide, which then undergoes macrocyclization with the N-terminus of the modified core peptide. Peptide backbone alpha-N-methylations change the physicochemical properties of amide bonds to provide structural constraints and other favorable characteristics including biological membrane permeability to peptides.

It participates in secondary metabolite biosynthesis. In terms of biological role, fusion protein of the methyltransferase mroM1 and a type I borosin core peptide; part of the gene cluster that mediates the biosynthesis of a type I borosin, a highly methylated cyclic peptide with potent biological activities. Type I borosins derive from the C-terminus of the fusion protein, and it is the same protein that methylates its own C-terminus using S-adenosyl methionine (SAM). The C-terminus is subsequently cleaved off and macrocyclized by a prolyloligopeptidase to give the final product. In Mycena rosella (Pink bonnet), this protein is Methyltransferase/ribosomally synthesized type I borosin cyclic peptide precursor mroMa1.